Consider the following 181-residue polypeptide: Crossover junction endodeoxyribonuclease RuvC (181 aa).

Catalysis depends on residues aspartate 8, glutamate 67, and aspartate 139. Aspartate 8, glutamate 67, and aspartate 139 together coordinate Mg(2+).

The protein belongs to the RuvC family. Homodimer which binds Holliday junction (HJ) DNA. The HJ becomes 2-fold symmetrical on binding to RuvC with unstacked arms; it has a different conformation from HJ DNA in complex with RuvA. In the full resolvosome a probable DNA-RuvA(4)-RuvB(12)-RuvC(2) complex forms which resolves the HJ. The cofactor is Mg(2+).

The protein localises to the cytoplasm. The catalysed reaction is Endonucleolytic cleavage at a junction such as a reciprocal single-stranded crossover between two homologous DNA duplexes (Holliday junction).. Its function is as follows. The RuvA-RuvB-RuvC complex processes Holliday junction (HJ) DNA during genetic recombination and DNA repair. Endonuclease that resolves HJ intermediates. Cleaves cruciform DNA by making single-stranded nicks across the HJ at symmetrical positions within the homologous arms, yielding a 5'-phosphate and a 3'-hydroxyl group; requires a central core of homology in the junction. The consensus cleavage sequence is 5'-(A/T)TT(C/G)-3'. Cleavage occurs on the 3'-side of the TT dinucleotide at the point of strand exchange. HJ branch migration catalyzed by RuvA-RuvB allows RuvC to scan DNA until it finds its consensus sequence, where it cleaves and resolves the cruciform DNA. This is Crossover junction endodeoxyribonuclease RuvC from Acinetobacter baumannii (strain SDF).